The chain runs to 105 residues: UPF0235 protein RAF_ORF1191 (105 aa).

Belongs to the UPF0235 family.

The protein is UPF0235 protein RAF_ORF1191 of Rickettsia africae (strain ESF-5).